The sequence spans 356 residues: Holliday junction branch migration complex subunit RuvB (356 aa).

A large ATPase domain (RuvB-L) region spans residues 13-201 (SSNLSRKTRL…FGITQRLNFY (189 aa)). The tract at residues 15–35 (NLSRKTRLLDPTPSLEEGKVR) is disordered. Residues Leu40, Arg41, Gly82, Lys85, Thr86, Thr87, 148–150 (EDF), Arg191, Tyr201, and Arg238 contribute to the ATP site. A Mg(2+)-binding site is contributed by Thr86. The tract at residues 202–273 (SISDLNRIIQ…LVDKSLTLHQ (72 aa)) is small ATPAse domain (RuvB-S). The tract at residues 276–356 (ECGLDQSDRR…NSCKNSPIIK (81 aa)) is head domain (RuvB-H). DNA-binding residues include Arg331 and Arg336.

This sequence belongs to the RuvB family. In terms of assembly, homohexamer. Forms an RuvA(8)-RuvB(12)-Holliday junction (HJ) complex. HJ DNA is sandwiched between 2 RuvA tetramers; dsDNA enters through RuvA and exits via RuvB. An RuvB hexamer assembles on each DNA strand where it exits the tetramer. Each RuvB hexamer is contacted by two RuvA subunits (via domain III) on 2 adjacent RuvB subunits; this complex drives branch migration. In the full resolvosome a probable DNA-RuvA(4)-RuvB(12)-RuvC(2) complex forms which resolves the HJ.

Its subcellular location is the cytoplasm. The catalysed reaction is ATP + H2O = ADP + phosphate + H(+). The RuvA-RuvB-RuvC complex processes Holliday junction (HJ) DNA during genetic recombination and DNA repair, while the RuvA-RuvB complex plays an important role in the rescue of blocked DNA replication forks via replication fork reversal (RFR). RuvA specifically binds to HJ cruciform DNA, conferring on it an open structure. The RuvB hexamer acts as an ATP-dependent pump, pulling dsDNA into and through the RuvAB complex. RuvB forms 2 homohexamers on either side of HJ DNA bound by 1 or 2 RuvA tetramers; 4 subunits per hexamer contact DNA at a time. Coordinated motions by a converter formed by DNA-disengaged RuvB subunits stimulates ATP hydrolysis and nucleotide exchange. Immobilization of the converter enables RuvB to convert the ATP-contained energy into a lever motion, pulling 2 nucleotides of DNA out of the RuvA tetramer per ATP hydrolyzed, thus driving DNA branch migration. The RuvB motors rotate together with the DNA substrate, which together with the progressing nucleotide cycle form the mechanistic basis for DNA recombination by continuous HJ branch migration. Branch migration allows RuvC to scan DNA until it finds its consensus sequence, where it cleaves and resolves cruciform DNA. This Prochlorococcus marinus (strain SARG / CCMP1375 / SS120) protein is Holliday junction branch migration complex subunit RuvB.